We begin with the raw amino-acid sequence, 239 residues long: Cyclo(L-leucyl-L-phenylalanyl) synthase (239 aa).

Ser-37 (nucleophile) is an active-site residue. Substrate-binding positions include Asn-40, 178–182, and Tyr-202; that span reads YVLAE.

It belongs to the CDPS family. In terms of assembly, monomer.

The catalysed reaction is L-phenylalanyl-tRNA(Phe) + L-leucyl-tRNA(Leu) = cyclo(L-phenylalanyl-L-leucyl) + tRNA(Phe) + tRNA(Leu) + H(+). Involved in the biosynthesis of albonoursin (cyclo[(alpha,beta-dehydro-Phe)-(alpha,beta-dehydro-Leu)]), an antibacterial peptide. It uses activated amino acids in the form of aminoacyl-tRNAs (aa-tRNAs) as substrates to catalyze the ATP-independent formation of cyclodipeptides which are intermediates in diketopiperazine (DKP) biosynthetic pathways. Catalyzes the formation of cyclo(L-Phe-L-Leu) (cFL) as major products from L-L-phenylalanyl-tRNA(Phe) and L-leucyl-tRNA(Leu). AlbC can also incorporate various nonpolar residues, such as L-phenylalanine, L-leucine, L-tyrosine and L-methionine, and to a much lesser extent L-alanine and L-valine, into cyclodipeptides. Indeed, ten possible cyclodipeptides composed of L-phenylalanine, L-leucine, L-tyrosine and L-methionine are all synthesized to detectable amounts by AlbC. This chain is Cyclo(L-leucyl-L-phenylalanyl) synthase (albC), found in Streptomyces noursei (Streptomyces albulus).